The following is a 459-amino-acid chain: Methionine aminopeptidase 2-1 (459 aa).

Over residues 1–12 (MGSKSPEDHRQG) the composition is skewed to basic and acidic residues. A disordered region spans residues 1–79 (MGSKSPEDHR…RKRNKKKSKK (79 aa)). Over residues 43 to 54 (GQDEDGDDDDDE) the composition is skewed to acidic residues. Positions 67–79 (KKKRKRNKKKSKK) are enriched in basic residues. Residue His-210 coordinates substrate. A divalent metal cation is bound by residues Asp-231, Asp-242, and His-311. Position 319 (His-319) interacts with substrate. A divalent metal cation contacts are provided by Glu-344 and Glu-440.

The protein belongs to the peptidase M24A family. Methionine aminopeptidase eukaryotic type 2 subfamily. Co(2+) serves as cofactor. Requires Zn(2+) as cofactor. Mn(2+) is required as a cofactor. The cofactor is Fe(2+).

It is found in the cytoplasm. It carries out the reaction Release of N-terminal amino acids, preferentially methionine, from peptides and arylamides.. Its function is as follows. Cotranslationally removes the N-terminal methionine from nascent proteins. The N-terminal methionine is often cleaved when the second residue in the primary sequence is small and uncharged (Met-Ala-, Cys, Gly, Pro, Ser, Thr, or Val). The polypeptide is Methionine aminopeptidase 2-1 (Pyrenophora tritici-repentis (strain Pt-1C-BFP) (Wheat tan spot fungus)).